Here is a 217-residue protein sequence, read N- to C-terminus: Probable transaldolase (217 aa).

The Schiff-base intermediate with substrate role is filled by Lys-83.

It belongs to the transaldolase family. Type 3B subfamily.

The protein resides in the cytoplasm. It catalyses the reaction D-sedoheptulose 7-phosphate + D-glyceraldehyde 3-phosphate = D-erythrose 4-phosphate + beta-D-fructose 6-phosphate. Its pathway is carbohydrate degradation; pentose phosphate pathway; D-glyceraldehyde 3-phosphate and beta-D-fructose 6-phosphate from D-ribose 5-phosphate and D-xylulose 5-phosphate (non-oxidative stage): step 2/3. In terms of biological role, transaldolase is important for the balance of metabolites in the pentose-phosphate pathway. This is Probable transaldolase from Roseobacter denitrificans (strain ATCC 33942 / OCh 114) (Erythrobacter sp. (strain OCh 114)).